We begin with the raw amino-acid sequence, 301 residues long: UDP-3-O-acyl-N-acetylglucosamine deacetylase (301 aa).

Residues histidine 81, histidine 237, and aspartate 241 each contribute to the Zn(2+) site. Histidine 264 (proton donor) is an active-site residue.

It belongs to the LpxC family. It depends on Zn(2+) as a cofactor.

The catalysed reaction is a UDP-3-O-[(3R)-3-hydroxyacyl]-N-acetyl-alpha-D-glucosamine + H2O = a UDP-3-O-[(3R)-3-hydroxyacyl]-alpha-D-glucosamine + acetate. It functions in the pathway glycolipid biosynthesis; lipid IV(A) biosynthesis; lipid IV(A) from (3R)-3-hydroxytetradecanoyl-[acyl-carrier-protein] and UDP-N-acetyl-alpha-D-glucosamine: step 2/6. In terms of biological role, catalyzes the hydrolysis of UDP-3-O-myristoyl-N-acetylglucosamine to form UDP-3-O-myristoylglucosamine and acetate, the committed step in lipid A biosynthesis. The polypeptide is UDP-3-O-acyl-N-acetylglucosamine deacetylase (Leptospira borgpetersenii serovar Hardjo-bovis (strain JB197)).